Reading from the N-terminus, the 223-residue chain is Putative protein phosphatase 2C 63 (223 aa).

Residues 1–22 form a disordered region; it reads MASSQQAVRETGRGRASSSSAG. The region spanning 1–212 is the PPM-type phosphatase domain; sequence MASSQQAVRE…RNFHVHSSHV (212 aa).

Belongs to the PP2C family.

It catalyses the reaction O-phospho-L-seryl-[protein] + H2O = L-seryl-[protein] + phosphate. It carries out the reaction O-phospho-L-threonyl-[protein] + H2O = L-threonyl-[protein] + phosphate. This is Putative protein phosphatase 2C 63 from Oryza sativa subsp. japonica (Rice).